Reading from the N-terminus, the 339-residue chain is Inositol 2-dehydrogenase (339 aa).

It belongs to the Gfo/Idh/MocA family. In terms of assembly, homotetramer.

It catalyses the reaction myo-inositol + NAD(+) = scyllo-inosose + NADH + H(+). Its function is as follows. Involved in the oxidation of myo-inositol (MI) to 2-keto-myo-inositol (2KMI or 2-inosose). The protein is Inositol 2-dehydrogenase of Leifsonia xyli subsp. xyli (strain CTCB07).